Here is a 123-residue protein sequence, read N- to C-terminus: MACRCLSFLLMGTFLSVSQTVLAQLDALLVFPGQVAQLSCTLSPQHVTIRDYGVSWYQQRAGSAPRYLLYYRSEEDHHRPADIPDRFSAAKDEAHNACVLTISPVQPEDDADYYCSVGYGFSP.

Residues 1-20 form the signal peptide; it reads MACRCLSFLLMGTFLSVSQT. The Ig-like domain occupies 21 to 123; the sequence is VLAQLDALLV…YCSVGYGFSP (103 aa). A disulfide bridge connects residues Cys40 and Cys115.

This sequence belongs to the immunoglobulin superfamily. In terms of tissue distribution, expressed in B-cell precursors. Expressed in fetal liver, bone marrow, spleen and lymph node.

Its function is as follows. Associates with the Ig-mu chain to form a molecular complex that is expressed on the surface of pre-B-cells. This is Pre-B lymphocyte protein 3 (VPREB3) from Homo sapiens (Human).